A 457-amino-acid chain; its full sequence is Succinate-semialdehyde dehydrogenase [NADP(+)] (457 aa).

Residues 133–134 (WN), 157–160 (KHAS), and 209–210 (GS) contribute to the NADP(+) site. Glu-231 functions as the Proton acceptor in the catalytic mechanism. Leu-232 is an NADP(+) binding site. Cys-265 functions as the Nucleophile in the catalytic mechanism. Residue Glu-362 coordinates NADP(+).

It belongs to the aldehyde dehydrogenase family.

The catalysed reaction is succinate semialdehyde + NADP(+) + H2O = succinate + NADPH + 2 H(+). Catalyzes the NADP(+)-dependent oxidation of succinate semialdehyde to succinate. It is believed to be the main source of succinate semialdehyde dehydrogenase activity in Mycobacterium. The protein is Succinate-semialdehyde dehydrogenase [NADP(+)] (gabD1) of Mycobacterium leprae (strain TN).